Consider the following 191-residue polypeptide: Glutathione S-transferase Y-2 (191 aa).

Positions 2-80 (TFATVYIKPH…YIVAKGSKPE (79 aa)) constitute a GST N-terminal domain. Positions 85–191 (TTEERATNTR…VSQHPIIKNM (107 aa)) constitute a GST C-terminal domain.

The protein belongs to the GST superfamily.

It catalyses the reaction RX + glutathione = an S-substituted glutathione + a halide anion + H(+). Conjugation of reduced glutathione to a wide number of exogenous and endogenous hydrophobic electrophiles. In Pichia kudriavzevii (Yeast), this protein is Glutathione S-transferase Y-2 (GSTY2).